The chain runs to 124 residues: UPF0102 protein MSMEG_2508/MSMEI_2448 (124 aa).

This sequence belongs to the UPF0102 family.

This Mycolicibacterium smegmatis (strain ATCC 700084 / mc(2)155) (Mycobacterium smegmatis) protein is UPF0102 protein MSMEG_2508/MSMEI_2448.